Consider the following 878-residue polypeptide: Valine--tRNA ligase (878 aa).

Positions 43–53 match the 'HIGH' region motif; it reads PYPTGRLHLGH. A 'KMSKS' region motif is present at residues 527 to 531; sequence KMSKS. Position 530 (lysine 530) interacts with ATP.

It belongs to the class-I aminoacyl-tRNA synthetase family. ValS type 2 subfamily.

The protein resides in the cytoplasm. The enzyme catalyses tRNA(Val) + L-valine + ATP = L-valyl-tRNA(Val) + AMP + diphosphate. Catalyzes the attachment of valine to tRNA(Val). As ValRS can inadvertently accommodate and process structurally similar amino acids such as threonine, to avoid such errors, it has a 'posttransfer' editing activity that hydrolyzes mischarged Thr-tRNA(Val) in a tRNA-dependent manner. In Methanocaldococcus jannaschii (strain ATCC 43067 / DSM 2661 / JAL-1 / JCM 10045 / NBRC 100440) (Methanococcus jannaschii), this protein is Valine--tRNA ligase.